An 89-amino-acid polypeptide reads, in one-letter code: NADH-ubiquinone oxidoreductase chain 4L (89 aa).

A run of 3 helical transmembrane segments spans residues 1–21, 22–42, and 55–75; these read MNFS…NRKN, IILM…LILI, and FAIY…GILV.

Belongs to the complex I subunit 4L family.

It is found in the mitochondrion membrane. The enzyme catalyses a ubiquinone + NADH + 5 H(+)(in) = a ubiquinol + NAD(+) + 4 H(+)(out). Its function is as follows. Core subunit of the mitochondrial membrane respiratory chain NADH dehydrogenase (Complex I) that is believed to belong to the minimal assembly required for catalysis. Complex I functions in the transfer of electrons from NADH to the respiratory chain. The immediate electron acceptor for the enzyme is believed to be ubiquinone. This is NADH-ubiquinone oxidoreductase chain 4L (nd4L) from Talaromyces marneffei (Penicillium marneffei).